Here is a 385-residue protein sequence, read N- to C-terminus: Spermidine/putrescine import ATP-binding protein PotA (385 aa).

The ABC transporter domain maps to Ala-27–Ala-257. Gly-59 to Thr-66 is a binding site for ATP.

Belongs to the ABC transporter superfamily. Spermidine/putrescine importer (TC 3.A.1.11.1) family. The complex is composed of two ATP-binding proteins (PotA), two transmembrane proteins (PotB and PotC) and a solute-binding protein (PotD).

The protein resides in the cell inner membrane. The catalysed reaction is ATP + H2O + polyamine-[polyamine-binding protein]Side 1 = ADP + phosphate + polyamineSide 2 + [polyamine-binding protein]Side 1.. In terms of biological role, part of the ABC transporter complex PotABCD involved in spermidine/putrescine import. Responsible for energy coupling to the transport system. The sequence is that of Spermidine/putrescine import ATP-binding protein PotA from Methylococcus capsulatus (strain ATCC 33009 / NCIMB 11132 / Bath).